The primary structure comprises 144 residues: Large ribosomal subunit protein uL15 (144 aa).

Residues 20–49 (GRGIGSGLGKTGGRGHKGQKSRSGGFHKVG) form a disordered region. Residues 21-31 (RGIGSGLGKTG) show a composition bias toward gly residues.

Belongs to the universal ribosomal protein uL15 family. As to quaternary structure, part of the 50S ribosomal subunit.

In terms of biological role, binds to the 23S rRNA. This chain is Large ribosomal subunit protein uL15, found in Neisseria meningitidis serogroup C (strain 053442).